We begin with the raw amino-acid sequence, 344 residues long: tRNA N6-adenosine threonylcarbamoyltransferase (344 aa).

Residues histidine 113 and histidine 117 each contribute to the Fe cation site. Substrate-binding positions include leucine 135–glycine 139, aspartate 169, glycine 182, aspartate 186, and asparagine 278. Position 306 (aspartate 306) interacts with Fe cation. A disordered region spans residues glutamate 325–phenylalanine 344. Residues serine 326 to phenylalanine 344 are compositionally biased toward polar residues.

This sequence belongs to the KAE1 / TsaD family. Requires Fe(2+) as cofactor.

It is found in the cytoplasm. The catalysed reaction is L-threonylcarbamoyladenylate + adenosine(37) in tRNA = N(6)-L-threonylcarbamoyladenosine(37) in tRNA + AMP + H(+). Its function is as follows. Required for the formation of a threonylcarbamoyl group on adenosine at position 37 (t(6)A37) in tRNAs that read codons beginning with adenine. Is involved in the transfer of the threonylcarbamoyl moiety of threonylcarbamoyl-AMP (TC-AMP) to the N6 group of A37, together with TsaE and TsaB. TsaD likely plays a direct catalytic role in this reaction. The polypeptide is tRNA N6-adenosine threonylcarbamoyltransferase (Corynebacterium glutamicum (strain ATCC 13032 / DSM 20300 / JCM 1318 / BCRC 11384 / CCUG 27702 / LMG 3730 / NBRC 12168 / NCIMB 10025 / NRRL B-2784 / 534)).